The chain runs to 160 residues: Ribosomal RNA large subunit methyltransferase H (160 aa).

Residues Leu76, Gly108, and 127-132 (FGRMTF) contribute to the S-adenosyl-L-methionine site.

The protein belongs to the RNA methyltransferase RlmH family. As to quaternary structure, homodimer.

It localises to the cytoplasm. The catalysed reaction is pseudouridine(1915) in 23S rRNA + S-adenosyl-L-methionine = N(3)-methylpseudouridine(1915) in 23S rRNA + S-adenosyl-L-homocysteine + H(+). In terms of biological role, specifically methylates the pseudouridine at position 1915 (m3Psi1915) in 23S rRNA. This is Ribosomal RNA large subunit methyltransferase H from Methylocella silvestris (strain DSM 15510 / CIP 108128 / LMG 27833 / NCIMB 13906 / BL2).